The sequence spans 233 residues: Small ribosomal subunit protein uS3 (233 aa).

The KH type-2 domain occupies 39–107; sequence VRQFLMKTLE…PVQINISEVR (69 aa).

This sequence belongs to the universal ribosomal protein uS3 family. As to quaternary structure, part of the 30S ribosomal subunit. Forms a tight complex with proteins S10 and S14.

In terms of biological role, binds the lower part of the 30S subunit head. Binds mRNA in the 70S ribosome, positioning it for translation. The chain is Small ribosomal subunit protein uS3 from Buchnera aphidicola subsp. Acyrthosiphon pisum (strain 5A).